We begin with the raw amino-acid sequence, 349 residues long: MAFKIASSPHVTRNLHTSTVMQRVILCLLPGLVVQCAFFGWGTLVQVLLAILVALSCEAAVMKLRNRNIKASLSDNSAMLTAILIGVAIPPLAPWWMIVMGTAFAIVIVKHLYGGLGHNLFNPAMAAYVLLLVSFPVQMTTWIAPSTVALHSPSLVESLQLIFNIGAHVNMEQFRLGIDGMTMATPLDTLKTDLSMGLTTTESLTKAIFDGSTGVGWFWVNLAYLAGGLVLLKLKAIRWHISTGVLLGLFVASSIGFLLSPDTQASPLMHLFSGATMLAAFFIATDPVTAATSPRGRIIFGALIGVLVYIIRTKGGYPDAFAFAVLLANLCAPFIDYYVRPRTYGHSTS.

Helical transmembrane passes span 20–42 (VMQR…FGWG), 77–99 (SAML…WMIV), and 124–144 (AMAA…TWIA). The residue at position 185 (T185) is an FMN phosphoryl threonine. The next 5 membrane-spanning stretches (helical) occupy residues 212–232 (STGV…LVLL), 239–259 (WHIS…GFLL), 265–285 (ASPL…FIAT), 291–311 (ATSP…VYII), and 315–335 (GGYP…APFI).

It belongs to the NqrB/RnfD family. In terms of assembly, the complex is composed of six subunits: RnfA, RnfB, RnfC, RnfD, RnfE and RnfG. FMN is required as a cofactor.

It is found in the cell inner membrane. Part of a membrane-bound complex that couples electron transfer with translocation of ions across the membrane. The polypeptide is Ion-translocating oxidoreductase complex subunit D (Shewanella baltica (strain OS185)).